Here is a 62-residue protein sequence, read N- to C-terminus: Large ribosomal subunit protein bL32m (62 aa).

The protein belongs to the bacterial ribosomal protein bL32 family.

It localises to the mitochondrion. This chain is Large ribosomal subunit protein bL32m (RPL32), found in Reclinomonas americana.